Consider the following 370-residue polypeptide: tRNA-specific 2-thiouridylase MnmA 1 (370 aa).

ATP-binding positions include 9–16 (GMSGGVDS) and M35. An interaction with target base in tRNA region spans residues 95–97 (NPD). C100 (nucleophile) is an active-site residue. C100 and C196 are joined by a disulfide. G124 lines the ATP pocket. The tract at residues 146–148 (KDQ) is interaction with tRNA. C196 serves as the catalytic Cysteine persulfide intermediate. An interaction with tRNA region spans residues 306–307 (RY).

Belongs to the MnmA/TRMU family.

Its subcellular location is the cytoplasm. It carries out the reaction S-sulfanyl-L-cysteinyl-[protein] + uridine(34) in tRNA + AH2 + ATP = 2-thiouridine(34) in tRNA + L-cysteinyl-[protein] + A + AMP + diphosphate + H(+). In terms of biological role, catalyzes the 2-thiolation of uridine at the wobble position (U34) of tRNA, leading to the formation of s(2)U34. In Geobacillus kaustophilus (strain HTA426), this protein is tRNA-specific 2-thiouridylase MnmA 1.